We begin with the raw amino-acid sequence, 327 residues long: Cell surface glycoprotein CD200 receptor 1 (327 aa).

Positions methionine 1–serine 23 are cleaved as a signal peptide. The Extracellular segment spans residues serine 24–serine 239. An Ig-like V-type domain is found at proline 26–glutamine 145. 8 N-linked (GlcNAc...) asparagine glycosylation sites follow: asparagine 29, asparagine 34, asparagine 43, asparagine 96, asparagine 159, asparagine 187, asparagine 192, and asparagine 222. Intrachain disulfides connect cysteine 58–cysteine 129 and cysteine 81–cysteine 97. Residues leucine 147–serine 226 enclose the Ig-like C2-type domain. 2 disulfide bridges follow: cysteine 164–cysteine 213 and cysteine 183–cysteine 201. Residues tyrosine 240–leucine 260 traverse the membrane as a helical segment. Residues lysine 261–isoleucine 327 are Cytoplasmic-facing.

It belongs to the CD200R family. CD200 and CD200R1 interact via their respective N-terminal Ig-like domains. Phosphorylated on tyrosine residues. In terms of processing, highly N-glycosylated. In terms of tissue distribution, restricted to cells of the myeloid lineage.

It localises to the cell membrane. Its function is as follows. Inhibitory receptor for the CD200/OX2 cell surface glycoprotein. Limits inflammation by inhibiting the expression of pro-inflammatory molecules including TNF-alpha, interferons, and inducible nitric oxide synthase (iNOS) in response to selected stimuli. In Rattus norvegicus (Rat), this protein is Cell surface glycoprotein CD200 receptor 1 (Cd200r1).